We begin with the raw amino-acid sequence, 189 residues long: GTP cyclohydrolase 1 (189 aa).

Zn(2+) is bound by residues C78, H81, and C150.

The protein belongs to the GTP cyclohydrolase I family. Toroid-shaped homodecamer, composed of two pentamers of five dimers.

It catalyses the reaction GTP + H2O = 7,8-dihydroneopterin 3'-triphosphate + formate + H(+). Its pathway is cofactor biosynthesis; 7,8-dihydroneopterin triphosphate biosynthesis; 7,8-dihydroneopterin triphosphate from GTP: step 1/1. The protein is GTP cyclohydrolase 1 of Bacillus pumilus (strain SAFR-032).